The sequence spans 514 residues: Polygalacturonase (514 aa).

An N-terminal signal peptide occupies residues 1 to 22 (MAMKFIAPMAFVAMQLIIMAAA). The propeptide occupies 23–45 (EDQSAQIMLDSDIEQYLRSNRSL). 5 PbH1 repeats span residues 214-240 (CEGV…DIFA), 241-262 (SKNF…AIGT), 264-284 (SSNI…SIGS), 294-315 (VSYV…RIKT), and 323-344 (ASHI…LINQ). Asp255 acts as the Proton donor in catalysis. Residue His278 is part of the active site. Residues 434 to 514 (AKRKESKSHK…CSRHGKIYHP (81 aa)) constitute a propeptide that is removed on maturation. Asn460 and Asn472 each carry an N-linked (GlcNAc...) asparagine glycan.

It belongs to the glycosyl hydrolase 28 family.

The protein resides in the secreted. The protein localises to the plastid. Its subcellular location is the amyloplast. It localises to the cell wall. The catalysed reaction is (1,4-alpha-D-galacturonosyl)n+m + H2O = (1,4-alpha-D-galacturonosyl)n + (1,4-alpha-D-galacturonosyl)m.. The protein is Polygalacturonase of Cryptomeria japonica (Japanese cedar).